The chain runs to 500 residues: Endonuclease domain-containing 1 protein (500 aa).

An N-terminal signal peptide occupies residues 1–21 (MGTARWLALGSLFALAGLLEG). The disordered stretch occupies residues 293-323 (ERMVQSQKSSSPLSSTRSKRSTLLPPEASEG). Low complexity predominate over residues 297–317 (QSQKSSSPLSSTRSKRSTLLP). Lys-407 is modified (N6-acetyllysine).

The protein belongs to the DNA/RNA non-specific endonuclease family. Interacts with RNF26; this interaction is important to modulate innate immune signaling through the cGAS-STING pathway.

Its subcellular location is the secreted. In terms of biological role, may act as a DNase and a RNase. Plays a role in the modulation of innate immune signaling through the cGAS-STING pathway by interacting with RNF26. This is Endonuclease domain-containing 1 protein (ENDOD1) from Homo sapiens (Human).